The sequence spans 145 residues: uncharacterized protein (145 aa).

Disordered stretches follow at residues 1–41 and 122–145; these read MRRL…PPGT and RLPS…PLAL. Over residues 20-34 the composition is skewed to polar residues; that stretch reads GGPQNGTSGCTTAPQ. The span at 134 to 145 shows a compositional bias: basic and acidic residues; sequence DSQHPREVPLAL.

In terms of tissue distribution, ubiquitous.

This is an uncharacterized protein from Homo sapiens (Human).